A 72-amino-acid polypeptide reads, in one-letter code: Conotoxin LvVIA (72 aa).

An N-terminal signal peptide occupies residues valine 1–alanine 17. Residues aspartate 18 to threonine 41 constitute a propeptide that is removed on maturation. 3 cysteine pairs are disulfide-bonded: cysteine 44–cysteine 58, cysteine 51–cysteine 63, and cysteine 57–cysteine 70.

Belongs to the conotoxin O1 superfamily. As to expression, expressed by the venom duct.

It localises to the secreted. This Conus lividus (Livid cone) protein is Conotoxin LvVIA.